The primary structure comprises 550 residues: Glucose-6-phosphate isomerase 2 (550 aa).

Glutamate 359 serves as the catalytic Proton donor. Residues histidine 390 and lysine 514 contribute to the active site.

This sequence belongs to the GPI family.

The protein localises to the cytoplasm. It carries out the reaction alpha-D-glucose 6-phosphate = beta-D-fructose 6-phosphate. The protein operates within carbohydrate biosynthesis; gluconeogenesis. Its pathway is carbohydrate degradation; glycolysis; D-glyceraldehyde 3-phosphate and glycerone phosphate from D-glucose: step 2/4. Its function is as follows. Catalyzes the reversible isomerization of glucose-6-phosphate to fructose-6-phosphate. The polypeptide is Glucose-6-phosphate isomerase 2 (Streptomyces avermitilis (strain ATCC 31267 / DSM 46492 / JCM 5070 / NBRC 14893 / NCIMB 12804 / NRRL 8165 / MA-4680)).